A 635-amino-acid chain; its full sequence is MVSIRLPDGSVRQYEHPVTVAEVAASIGPGLAKAALGGKLDGELVDTSTVIDRDASLAIVTDKDADGLDIIRHSTAHLLAYAVKELYPEAQVTIGPVIDNGFYYDFAYNRPFTPEDLEKIEKRMQELAKKDEPVTRRVVSRDEAAGYFRSIGEKYKAEIIESIPQSDEIKLYSHGGFTDLCRGPHVPSTGKLKVFKLMKVAGAYWRGDSKNEQLQRIYGTAWTKKEDQDQYLHMLEEAEKRDHRKLGKQLDLFHMQEESPGMVFWHPKGWALWQQVEQYMRRRVNDAGYLEIKTPMIMDRSLWEASGHWQNYRENMFTTESEKRDYAIKPMNCPGHVQVFKHGLRSYRDLPLRYAEFGSCHRNEASGALHGLMRVRGFVQDDAHIFCTEDQFIAESIAFNTLAMSVYKDFGFEHIDIKLSLRPEQRAGTDETWDRAEQGLRDALTACGLTWQELPGEGAFYGPKIEYHIKDALGRSWQCGTLQLDMVLPERLGAEYVAEDNSRRRPVMLHRAIVGSMERFLGILIEHHAGAMPVWLAPFQAIVLNIAESQAEYAQSLAQTLQKQGVRVAADLRNEKISYKIREHTLEKVPYLLVVGDKERDAQTVAVRARGGVDLGVMPVEAFVERLQEDLRSFK.

Residues 1–61 (MVSIRLPDGS…DRDASLAIVT (61 aa)) enclose the TGS domain. The catalytic stretch occupies residues 242–533 (DHRKLGKQLD…LIEHHAGAMP (292 aa)). Zn(2+) contacts are provided by Cys-333, His-384, and His-510.

It belongs to the class-II aminoacyl-tRNA synthetase family. In terms of assembly, homodimer. The cofactor is Zn(2+).

It localises to the cytoplasm. The enzyme catalyses tRNA(Thr) + L-threonine + ATP = L-threonyl-tRNA(Thr) + AMP + diphosphate + H(+). Its function is as follows. Catalyzes the attachment of threonine to tRNA(Thr) in a two-step reaction: L-threonine is first activated by ATP to form Thr-AMP and then transferred to the acceptor end of tRNA(Thr). Also edits incorrectly charged L-seryl-tRNA(Thr). The chain is Threonine--tRNA ligase from Burkholderia vietnamiensis (strain G4 / LMG 22486) (Burkholderia cepacia (strain R1808)).